We begin with the raw amino-acid sequence, 588 residues long: Aspartate--tRNA ligase (588 aa).

Glu172 contributes to the L-aspartate binding site. The interval 196–199 (QLFK) is aspartate. An L-aspartate-binding site is contributed by Arg218. ATP-binding positions include 218-220 (RDE) and Gln227. His449 serves as a coordination point for L-aspartate. Glu483 serves as a coordination point for ATP. Arg490 contacts L-aspartate. Position 535-538 (535-538 (GLDR)) interacts with ATP.

The protein belongs to the class-II aminoacyl-tRNA synthetase family. Type 1 subfamily. Homodimer.

It is found in the cytoplasm. It catalyses the reaction tRNA(Asp) + L-aspartate + ATP = L-aspartyl-tRNA(Asp) + AMP + diphosphate. Catalyzes the attachment of L-aspartate to tRNA(Asp) in a two-step reaction: L-aspartate is first activated by ATP to form Asp-AMP and then transferred to the acceptor end of tRNA(Asp). The polypeptide is Aspartate--tRNA ligase (Pasteurella multocida (strain Pm70)).